Reading from the N-terminus, the 107-residue chain is Late embryogenesis abundant protein M10 (107 aa).

Residues 1–19 form the signal peptide; the sequence is MGNLMSLVLVALLFSLSLA.

Functionally, may be involved in the acquisition of desiccation tolerance during late phase of embryogenesis. The protein is Late embryogenesis abundant protein M10 of Arabidopsis thaliana (Mouse-ear cress).